A 62-amino-acid chain; its full sequence is Bacteriocin piscicolin-126 (62 aa).

Residues 1 to 18 (MKTVKELSVKEMQLTTGG) constitute a propeptide that is removed on maturation. Cys27 and Cys32 form a disulfide bridge.

It localises to the secreted. Functionally, inhibits the growth of several Gram-positive bacteria, especially the food-borne pathogen L.monocytogenes, but has no effect on the growth of a number of yeasts and Gram-negative bacteria. The sequence is that of Bacteriocin piscicolin-126 (pisA) from Carnobacterium maltaromaticum (Carnobacterium piscicola).